The following is a 300-amino-acid chain: Formylmethanofuran--tetrahydromethanopterin formyltransferase-like protein (300 aa).

This sequence belongs to the FTR family.

In Methanopyrus kandleri (strain AV19 / DSM 6324 / JCM 9639 / NBRC 100938), this protein is Formylmethanofuran--tetrahydromethanopterin formyltransferase-like protein.